A 562-amino-acid chain; its full sequence is Protein TBF1 (562 aa).

Residues 376 to 414 (ASMSNSSSGPHSSHNNSSNSNNNGSIGLRKPKAKRTWSK) are disordered. Low complexity predominate over residues 377–400 (SMSNSSSGPHSSHNNSSNSNNNGS). Positions 404-460 (RKPKAKRTWSKEEEEALVEGLKEVGPSWSKILDLYGPGGKITENLKNRTQVQLKDKA) constitute an HTH myb-type domain. Residues 431-456 (WSKILDLYGPGGKITENLKNRTQVQL) constitute a DNA-binding region (H-T-H motif). The tract at residues 495–562 (FSQSPNSSTI…GFDPHLEDGM (68 aa)) is disordered. Composition is skewed to polar residues over residues 496–522 (SQSP…ATED) and 532–552 (GQNS…SDNT).

As to quaternary structure, homodimer.

The protein localises to the nucleus. The protein resides in the chromosome. It is found in the telomere. In terms of biological role, binds the telomeric double-stranded TTAGGG repeat and negatively regulates telomere length. Involved in the regulation of gene expression. 52 binding sites have been identified, distributed over 15 chromosomes. A member of the general regulatory factors (GRFs) which act as genome partitioners. Acts as a chromatin insulator which are known as STARs (Subtelomeric anti-silencing region). STARs prevent negative or positive transcription influence by extending across chromatin to a promoter. In Saccharomyces cerevisiae (strain ATCC 204508 / S288c) (Baker's yeast), this protein is Protein TBF1 (TBF1).